The chain runs to 132 residues: Putative flagella-related protein F (132 aa).

The N-terminal stretch at 1–18 is a signal peptide; the sequence is MGFSSTVGSVLILTTLLI. Position 19 is an N-acetylcysteine (C19). A lipid anchor (S-archaeol cysteine) is attached at C19.

To M.jannaschii FlaF.

It is found in the archaeal flagellum. The sequence is that of Putative flagella-related protein F (flaF) from Methanococcus voltae.